The primary structure comprises 192 residues: Fe/S biogenesis protein NfuA (192 aa).

[4Fe-4S] cluster is bound by residues Cys149 and Cys152.

It belongs to the NfuA family. In terms of assembly, homodimer. [4Fe-4S] cluster is required as a cofactor.

In terms of biological role, involved in iron-sulfur cluster biogenesis. Binds a 4Fe-4S cluster, can transfer this cluster to apoproteins, and thereby intervenes in the maturation of Fe/S proteins. Could also act as a scaffold/chaperone for damaged Fe/S proteins. The chain is Fe/S biogenesis protein NfuA from Shewanella piezotolerans (strain WP3 / JCM 13877).